Here is a 150-residue protein sequence, read N- to C-terminus: MAEILDKVDRRLLEELKINARENIATLSKKLGIPRTTVHYRIKRLVEEGIIERFTIKPNYKKLNLGTTAFILIRYDPDSGLTQRQVAEQIAKIPGVYEVHIIAGEWDLLLKVRASNAEEVGRIVIDKLREIRGVGQTVTMVSFDTVKEEI.

The 62-residue stretch at 5-66 (LDKVDRRLLE…KPNYKKLNLG (62 aa)) folds into the HTH asnC-type domain. The H-T-H motif DNA-binding region spans 24–43 (IATLSKKLGIPRTTVHYRIK).

This is an uncharacterized protein from Pyrococcus abyssi (strain GE5 / Orsay).